A 624-amino-acid chain; its full sequence is Protein NRT1/ PTR FAMILY 6.1 (624 aa).

Residues 1-20 form a disordered region; it reads MVASEIKSPVSVPETPGSSS. 2 helical membrane-spanning segments follow: residues 83 to 100 and 114 to 134; these read MAYF…FYVM and FLGI…AYLG. Thr138 carries the phosphothreonine modification. The next 10 helical transmembrane spans lie at 139 to 159, 184 to 204, 230 to 250, 258 to 278, 378 to 398, 422 to 442, 459 to 479, 504 to 524, 537 to 557, and 585 to 605; these read IAIF…GASL, SWQM…AAGI, FFNF…TLVV, WGMA…LFFA, LIPI…YLTL, VFPG…FVPI, VGIG…FENY, WLLI…VGLL, SIGS…ATIL, and CLYW…LWSA.

Belongs to the major facilitator superfamily. Proton-dependent oligopeptide transporter (POT/PTR) (TC 2.A.17) family. As to expression, expressed in flower and siliques.

It is found in the membrane. The polypeptide is Protein NRT1/ PTR FAMILY 6.1 (NPF6.1) (Arabidopsis thaliana (Mouse-ear cress)).